We begin with the raw amino-acid sequence, 564 residues long: Phenylalanine--tRNA ligase beta subunit (564 aa).

One can recognise a B5 domain in the interval 286-362; it reads YFQNMLEVNV…IGMGLDSFKP (77 aa). Mg(2+)-binding residues include aspartate 340, aspartate 346, glutamate 349, and glutamate 350.

Belongs to the phenylalanyl-tRNA synthetase beta subunit family. Type 2 subfamily. In terms of assembly, tetramer of two alpha and two beta subunits. Requires Mg(2+) as cofactor.

Its subcellular location is the cytoplasm. The enzyme catalyses tRNA(Phe) + L-phenylalanine + ATP = L-phenylalanyl-tRNA(Phe) + AMP + diphosphate + H(+). In Borrelia turicatae (strain 91E135), this protein is Phenylalanine--tRNA ligase beta subunit.